Consider the following 605-residue polypeptide: Glycerophosphodiester phosphodiesterase domain-containing protein 5 (605 aa).

At 1 to 42 the chain is on the cytoplasmic side; the sequence is MVRHQPLQYYEPQLCLSCLTGIYGCRWKRYQRSHDDTTPWER. 2 disulfide bridges follow: cysteine 15/cysteine 18 and cysteine 25/cysteine 571. The chain crosses the membrane as a helical span at residues 43–63; it reads LWFLLLTFTFGLTLTWLYFWW. Over 64-89 the chain is Extracellular; the sequence is EVHNDYDEFNWYLYNRMGYWSDWPVP. The helical transmembrane segment at 90–110 threads the bilayer; sequence ILVTTAAAFAYIAGLLVLALC. Topologically, residues 111-125 are cytoplasmic; sequence HIAVGQQMNLHWLHK. The helical transmembrane segment at 126-146 threads the bilayer; that stretch reads IGLVVILASTVVAMSAVAQLW. Over 147-160 the chain is Extracellular; it reads EDEWEVLLISLQGT. The chain crosses the membrane as a helical span at residues 161 to 181; the sequence is APFLHVGAVAAVTMLSWIVAG. Residues 182 to 192 are Cytoplasmic-facing; that stretch reads QFARAERTSSQ. The helical transmembrane segment at 193–213 threads the bilayer; it reads VTILCTFFTVVFALYLAPLTI. Topologically, residues 214–496 are extracellular; sequence SSPCIMEKKD…PLWIMPPDEY (283 aa). Residues 228 to 485 form the GP-PDE domain; that stretch reads PALIGHRGAP…DNSHALSQVP (258 aa). Residues asparagine 301, asparagine 336, asparagine 352, asparagine 374, and asparagine 448 are each glycosylated (N-linked (GlcNAc...) asparagine). Residues 497–517 traverse the membrane as a helical segment; sequence CLMWVTADLVSFTLIVGIFVL. At 518-605 the chain is on the cytoplasmic side; that stretch reads QKWRLGGIRS…TKTLIERSGR (88 aa). The disordered stretch occupies residues 582–605; the sequence is STATPVGPRGGGSHTKTLIERSGR.

It belongs to the glycerophosphoryl diester phosphodiesterase family. As to quaternary structure, interacts with PRDX1; forms a mixed-disulfide with PRDX1, leading to disrupt intramolecular disulfide bond between Cys-25 and Cys-571. In terms of processing, intramolecular disulfide bond between Cys-25 and Cys-571 is reduced by PRDX1.

It is found in the endomembrane system. The protein resides in the cytoplasm. Its subcellular location is the perinuclear region. The protein localises to the cell projection. It localises to the growth cone. It catalyses the reaction a 1,2-diacyl-sn-glycero-3-phospho-(1D-myo-inositol-4,5-bisphosphate) + H2O = 1D-myo-inositol 1,4,5-trisphosphate + a 1,2-diacyl-sn-glycerol + H(+). It carries out the reaction sn-glycerol 3-phosphocholine + H2O = sn-glycerol 3-phosphate + choline + H(+). Glycerophosphodiester phosphodiesterase that promotes neurite formation and drives spinal motor neuron differentiation. Mediates the cleavage of glycosylphosphatidylinositol (GPI) anchor of target proteins: removes the GPI-anchor of RECK, leading to release RECK from the plasma membrane. May contribute to the osmotic regulation of cellular glycerophosphocholine. This is Glycerophosphodiester phosphodiesterase domain-containing protein 5 from Homo sapiens (Human).